A 427-amino-acid chain; its full sequence is Glutamate-1-semialdehyde 2,1-aminomutase (427 aa).

Lys265 bears the N6-(pyridoxal phosphate)lysine mark.

It belongs to the class-III pyridoxal-phosphate-dependent aminotransferase family. HemL subfamily. Homodimer. The cofactor is pyridoxal 5'-phosphate.

It localises to the cytoplasm. It carries out the reaction (S)-4-amino-5-oxopentanoate = 5-aminolevulinate. It functions in the pathway porphyrin-containing compound metabolism; protoporphyrin-IX biosynthesis; 5-aminolevulinate from L-glutamyl-tRNA(Glu): step 2/2. The chain is Glutamate-1-semialdehyde 2,1-aminomutase from Mannheimia succiniciproducens (strain KCTC 0769BP / MBEL55E).